Reading from the N-terminus, the 871-residue chain is DNA mismatch repair protein MutS (871 aa).

Residue 617-624 coordinates ATP; sequence GPNMGGKS.

This sequence belongs to the DNA mismatch repair MutS family.

This protein is involved in the repair of mismatches in DNA. It is possible that it carries out the mismatch recognition step. This protein has a weak ATPase activity. In Hydrogenovibrio crunogenus (strain DSM 25203 / XCL-2) (Thiomicrospira crunogena), this protein is DNA mismatch repair protein MutS.